Consider the following 297-residue polypeptide: UDP-3-O-acyl-N-acetylglucosamine deacetylase (297 aa).

The Zn(2+) site is built by His79, His238, and Asp242. His265 serves as the catalytic Proton donor.

This sequence belongs to the LpxC family. Requires Zn(2+) as cofactor.

The catalysed reaction is a UDP-3-O-[(3R)-3-hydroxyacyl]-N-acetyl-alpha-D-glucosamine + H2O = a UDP-3-O-[(3R)-3-hydroxyacyl]-alpha-D-glucosamine + acetate. The protein operates within glycolipid biosynthesis; lipid IV(A) biosynthesis; lipid IV(A) from (3R)-3-hydroxytetradecanoyl-[acyl-carrier-protein] and UDP-N-acetyl-alpha-D-glucosamine: step 2/6. Catalyzes the hydrolysis of UDP-3-O-myristoyl-N-acetylglucosamine to form UDP-3-O-myristoylglucosamine and acetate, the committed step in lipid A biosynthesis. This Blochmanniella pennsylvanica (strain BPEN) protein is UDP-3-O-acyl-N-acetylglucosamine deacetylase.